The following is a 491-amino-acid chain: Sodium-dependent glucose transporter 1 (491 aa).

Helical transmembrane passes span 26-46 (FIFVGRSMGYLGGSVLGGILF), 52-72 (HLLLGISMLATAAGLFVVPWC), 81-101 (VMSVVGMSMGFLDTGGNIIIL), 119-139 (FALGAFVAPILAKLALEFLPL), 165-185 (LSYIVIGTYILLVSLFLFILF), 210-230 (AVIFLLFLFFFCYVGAEVAYG), 255-275 (LFWGVFAAVRGLAICFATCLY), 277-297 (GTMLLLSVIGCTLSSLILVLF), 303-323 (LLWVGTAVYGASMATTFPSGF), 338-358 (SLFVVGAALGEMAIPASVGYL), and 365-385 (FPVLMYTALASSTMTAILFPV). Disordered stretches follow at residues 397-425 (AQYNRVESDDRRALLSSSGMEEEDEDEAQ) and 438-491 (NDQM…EKND). Over residues 416–425 (MEEEDEDEAQ) the composition is skewed to acidic residues. Residues 440-458 (QMKNSVTVISEDTPGNSAP) show a composition bias toward polar residues.

Belongs to the major facilitator superfamily.

It localises to the apical cell membrane. Its function is as follows. May function as a sodium-dependent glucose transporter. Potential channels for urea in the inner medulla of kidney. This chain is Sodium-dependent glucose transporter 1 (mfsd4b), found in Xenopus laevis (African clawed frog).